Consider the following 150-residue polypeptide: MNDRARARKLADRIKVVVAETLERRVKDPRLGFVTITDARVTPDLREATVFYTVLGDDTALAETAAALESAKGVLRAEVGRQTQVRFTPTLTFVPDTVPRQARQIEELLARARAADREVAERAKSAQPAGEPDPYRFDGAAAADDDEPAT.

The segment at 119–150 (VAERAKSAQPAGEPDPYRFDGAAAADDDEPAT) is disordered.

This sequence belongs to the RbfA family. In terms of assembly, monomer. Binds 30S ribosomal subunits, but not 50S ribosomal subunits or 70S ribosomes.

It localises to the cytoplasm. One of several proteins that assist in the late maturation steps of the functional core of the 30S ribosomal subunit. Associates with free 30S ribosomal subunits (but not with 30S subunits that are part of 70S ribosomes or polysomes). Required for efficient processing of 16S rRNA. May interact with the 5'-terminal helix region of 16S rRNA. The polypeptide is Ribosome-binding factor A (Acidothermus cellulolyticus (strain ATCC 43068 / DSM 8971 / 11B)).